The chain runs to 100 residues: UPF0251 protein swp_0615 (100 aa).

It belongs to the UPF0251 family.

This Shewanella piezotolerans (strain WP3 / JCM 13877) protein is UPF0251 protein swp_0615.